The chain runs to 410 residues: Elongation factor Tu, chloroplastic (410 aa).

Positions 10–215 (KPHVNIGTIG…NVDSYIPTPE (206 aa)) constitute a tr-type G domain. The segment at 19-26 (GHVDHGKT) is G1. 19-26 (GHVDHGKT) provides a ligand contact to GTP. Threonine 26 is a binding site for Mg(2+). Positions 61–65 (GITIN) are G2. The G3 stretch occupies residues 82-85 (DCPG). Residues 82–86 (DCPGH) and 137–140 (NKKD) contribute to the GTP site. The interval 137-140 (NKKD) is G4. A G5 region spans residues 175-177 (SAL).

It belongs to the TRAFAC class translation factor GTPase superfamily. Classic translation factor GTPase family. EF-Tu/EF-1A subfamily.

The protein resides in the plastid. It localises to the chloroplast. It catalyses the reaction GTP + H2O = GDP + phosphate + H(+). Its function is as follows. GTP hydrolase that promotes the GTP-dependent binding of aminoacyl-tRNA to the A-site of ribosomes during protein biosynthesis. This is Elongation factor Tu, chloroplastic (tufA) from Oltmannsiellopsis viridis (Marine flagellate).